Here is a 272-residue protein sequence, read N- to C-terminus: Universal stress protein MT2699 (272 aa).

ATP contacts are provided by residues glycine 15, 109–115 (GSVGIGR), and 123–124 (ST).

Belongs to the universal stress protein A family.

In Mycobacterium tuberculosis (strain CDC 1551 / Oshkosh), this protein is Universal stress protein MT2699.